A 149-amino-acid polypeptide reads, in one-letter code: Low molecular weight protein-tyrosine-phosphatase Wzb (149 aa).

Cys9 (nucleophile) is an active-site residue. Arg15 is a catalytic residue. Asp115 functions as the Proton donor in the catalytic mechanism.

Belongs to the low molecular weight phosphotyrosine protein phosphatase family.

It carries out the reaction O-phospho-L-tyrosyl-[protein] + H2O = L-tyrosyl-[protein] + phosphate. It functions in the pathway glycan metabolism; exopolysaccharide biosynthesis. In terms of biological role, dephosphorylates Wzc. Required for the extracellular polysaccharide colanic acid synthesis. Probably involved in the export of colanic acid from the cell to medium. Involved in protection of cells against contact-dependent growth inhibition (CDI). The polypeptide is Low molecular weight protein-tyrosine-phosphatase Wzb (wzb) (Salmonella typhi).